The chain runs to 291 residues: UPF0276 protein VV1_0952 (291 aa).

This sequence belongs to the UPF0276 family.

The sequence is that of UPF0276 protein VV1_0952 from Vibrio vulnificus (strain CMCP6).